Reading from the N-terminus, the 193-residue chain is Crossover junction endodeoxyribonuclease RuvC (193 aa).

Residues aspartate 7, glutamate 68, and aspartate 141 contribute to the active site. 3 residues coordinate Mg(2+): aspartate 7, glutamate 68, and aspartate 141.

Belongs to the RuvC family. Homodimer which binds Holliday junction (HJ) DNA. The HJ becomes 2-fold symmetrical on binding to RuvC with unstacked arms; it has a different conformation from HJ DNA in complex with RuvA. In the full resolvosome a probable DNA-RuvA(4)-RuvB(12)-RuvC(2) complex forms which resolves the HJ. It depends on Mg(2+) as a cofactor.

It is found in the cytoplasm. The catalysed reaction is Endonucleolytic cleavage at a junction such as a reciprocal single-stranded crossover between two homologous DNA duplexes (Holliday junction).. The RuvA-RuvB-RuvC complex processes Holliday junction (HJ) DNA during genetic recombination and DNA repair. Endonuclease that resolves HJ intermediates. Cleaves cruciform DNA by making single-stranded nicks across the HJ at symmetrical positions within the homologous arms, yielding a 5'-phosphate and a 3'-hydroxyl group; requires a central core of homology in the junction. The consensus cleavage sequence is 5'-(A/T)TT(C/G)-3'. Cleavage occurs on the 3'-side of the TT dinucleotide at the point of strand exchange. HJ branch migration catalyzed by RuvA-RuvB allows RuvC to scan DNA until it finds its consensus sequence, where it cleaves and resolves the cruciform DNA. In Renibacterium salmoninarum (strain ATCC 33209 / DSM 20767 / JCM 11484 / NBRC 15589 / NCIMB 2235), this protein is Crossover junction endodeoxyribonuclease RuvC.